The sequence spans 309 residues: Tyrosine recombinase XerD (309 aa).

In terms of domain architecture, Core-binding (CB) spans 3–88 (MRASLAIENF…ALRQFFRFLY (86 aa)). The 194-residue stretch at 109–302 (PLPKIMSVEN…LEERLHKLVS (194 aa)) folds into the Tyr recombinase domain. Catalysis depends on residues Arg-158, Lys-182, His-254, Arg-257, and His-280. Catalysis depends on Tyr-289, which acts as the O-(3'-phospho-DNA)-tyrosine intermediate.

Belongs to the 'phage' integrase family. XerD subfamily. As to quaternary structure, forms a cyclic heterotetrameric complex composed of two molecules of XerC and two molecules of XerD.

The protein resides in the cytoplasm. Functionally, site-specific tyrosine recombinase, which acts by catalyzing the cutting and rejoining of the recombining DNA molecules. The XerC-XerD complex is essential to convert dimers of the bacterial chromosome into monomers to permit their segregation at cell division. It also contributes to the segregational stability of plasmids. The chain is Tyrosine recombinase XerD from Brucella melitensis biotype 1 (strain ATCC 23456 / CCUG 17765 / NCTC 10094 / 16M).